The following is a 472-amino-acid chain: Uronate isomerase (472 aa).

Belongs to the metallo-dependent hydrolases superfamily. Uronate isomerase family.

It catalyses the reaction D-glucuronate = D-fructuronate. It carries out the reaction aldehydo-D-galacturonate = keto-D-tagaturonate. Its pathway is carbohydrate metabolism; pentose and glucuronate interconversion. This is Uronate isomerase from Halalkalibacterium halodurans (strain ATCC BAA-125 / DSM 18197 / FERM 7344 / JCM 9153 / C-125) (Bacillus halodurans).